The following is a 334-amino-acid chain: D-fructose 1,6-bisphosphatase class 2/sedoheptulose 1,7-bisphosphatase (334 aa).

4 residues coordinate Mn(2+): Asp33, Glu57, Asp85, and Glu88. Substrate is bound by residues 88–90 (EGT), Tyr119, 164–166 (RAR), and 186–188 (DGD). Glu213 lines the Mn(2+) pocket.

It belongs to the FBPase class 2 family. Homotetramer. The cofactor is Mn(2+).

It catalyses the reaction beta-D-fructose 1,6-bisphosphate + H2O = beta-D-fructose 6-phosphate + phosphate. It carries out the reaction D-sedoheptulose 1,7-bisphosphate + H2O = D-sedoheptulose 7-phosphate + phosphate. Its pathway is carbohydrate biosynthesis; Calvin cycle. Catalyzes the hydrolysis of fructose 1,6-bisphosphate (Fru 1,6-P2) and sedoheptulose 1,7-bisphosphate (Sed 1,7-P2) to fructose 6-phosphate and sedoheptulose 7-phosphate, respectively. The polypeptide is D-fructose 1,6-bisphosphatase class 2/sedoheptulose 1,7-bisphosphatase (Parasynechococcus marenigrum (strain WH8102)).